Here is a 325-residue protein sequence, read N- to C-terminus: ADP-ribose glycohydrolase MACROD1 (325 aa).

A disordered region spans residues 21–55 (LGAPRPWPGPSPGATRTRSSACGPPASLSAHHPRA). An N6-succinyllysine mark is found at Lys96, Lys103, and Lys129. Lys138 participates in a covalent cross-link: Glycyl lysine isopeptide (Lys-Gly) (interchain with G-Cter in SUMO2). One can recognise a Macro domain in the interval 141–322 (EPKYKKDKQL…IYRERLPHYF (182 aa)). A substrate-binding site is contributed by 159 to 161 (GDI). At Lys163 the chain carries N6-acetyllysine. Substrate contacts are provided by residues 172-174 (AAN), 179-184 (GGGGVD), 267-273 (ISTGVFG), and Phe306.

The protein belongs to the MacroD-type family. MacroD1/2-like subfamily. In terms of assembly, interacts with ESR1; Interacts in a manner that is estrogen independent but is enhanced by estrogen. Interacts (via macro domain) with AR.

Its subcellular location is the nucleus. The catalysed reaction is 3''-O-acetyl-ADP-D-ribose + H2O = ADP-D-ribose + acetate + H(+). It catalyses the reaction 2''-O-acetyl-ADP-D-ribose + H2O = ADP-D-ribose + acetate + H(+). It carries out the reaction 4-O-(ADP-D-ribosyl)-L-aspartyl-[protein] + H2O = L-aspartyl-[protein] + ADP-D-ribose + H(+). The enzyme catalyses 5-O-(ADP-D-ribosyl)-L-glutamyl-[protein] + H2O = L-glutamyl-[protein] + ADP-D-ribose + H(+). The catalysed reaction is alpha-NAD(+) + H2O = ADP-D-ribose + nicotinamide + H(+). With respect to regulation, subject to competitive inhibition by the product ADP-ribose. Its function is as follows. Removes ADP-ribose from aspartate and glutamate residues in proteins bearing a single ADP-ribose moiety. Inactive towards proteins bearing poly-ADP-ribose. Deacetylates O-acetyl-ADP ribose, a signaling molecule generated by the deacetylation of acetylated lysine residues in histones and other proteins. Plays a role in estrogen signaling. Binds to androgen receptor (AR) and amplifies the transactivation function of AR in response to androgen. May play an important role in carcinogenesis and/or progression of hormone-dependent cancers by feed-forward mechanism that activates ESR1 transactivation. Could be an ESR1 coactivator, providing a positive feedback regulatory loop for ESR1 signal transduction. Could be involved in invasive growth by down-regulating CDH1 in endometrial cancer cells. Enhances ESR1-mediated transcription activity. The sequence is that of ADP-ribose glycohydrolase MACROD1 (MACROD1) from Bos taurus (Bovine).